Reading from the N-terminus, the 199-residue chain is Charged multivesicular body protein 1b (199 aa).

2 coiled-coil regions span residues 15–42 (AKELHRNAKKCEKEEKTEKAKIKKAIQK) and 178–199 (TSVASTEQDELSQRLARLRDQV). The interval 167–199 (ELPQGQTGSVGTSVASTEQDELSQRLARLRDQV) is disordered. Polar residues predominate over residues 170 to 183 (QGQTGSVGTSVAST). Residues 186-196 (DELSQRLARLR) carry the MIT-interacting motif motif.

It belongs to the SNF7 family.

The protein localises to the cytoplasm. It is found in the cytosol. It localises to the endosome. Its subcellular location is the late endosome membrane. Its function is as follows. Probable peripherally associated component of the endosomal sorting required for transport complex III (ESCRT-III) which is involved in multivesicular bodies (MVBs) formation and sorting of endosomal cargo proteins into MVBs. MVBs contain intraluminal vesicles (ILVs) that are generated by invagination and scission from the limiting membrane of the endosome and mostly are delivered to lysosomes enabling degradation of membrane proteins, such as stimulated growth factor receptors, lysosomal enzymes and lipids. The sequence is that of Charged multivesicular body protein 1b (chmp1b) from Xenopus tropicalis (Western clawed frog).